Reading from the N-terminus, the 136-residue chain is Protein scalloped (136 aa).

The protein resides in the nucleus. In terms of biological role, probable transcription factor that function in the regulation of cell-specific gene expression during drosophila development, particularly in the differentiation of the nervous system. This is Protein scalloped (SD) from Junonia coenia (Peacock butterfly).